Consider the following 323-residue polypeptide: Peridinin-chlorophyll a-binding protein 3 (323 aa).

2 consecutive repeat copies span residues 1–173 and 174–323.

In terms of assembly, homotrimer.

The protein resides in the plastid. It is found in the chloroplast. In terms of biological role, water-soluble antenna for capture of solar energy in the blue-green range. Peridinin is an asymmetric carotenoid. The chain is Peridinin-chlorophyll a-binding protein 3 from Amphidinium carterae (Dinoflagellate).